The chain runs to 925 residues: Ectonucleotide pyrophosphatase/phosphodiesterase family member 1 (925 aa).

Residues 1–17 (MERDGCAGGGSRGGEGG) are compositionally biased toward gly residues. Positions 1 to 43 (MERDGCAGGGSRGGEGGRAPREGPAGNGRDRGRSHAAEAPGDP) are disordered. Residues 1–76 (MERDGCAGGG…RTAKDPNTYK (76 aa)) are Cytoplasmic-facing. The Di-leucine motif signature appears at 45–52 (AAASLLAP). A helical; Signal-anchor for type II membrane protein transmembrane segment spans residues 77 to 97 (VLSLVLSVCVLTTILGCIFGL). Residues 98–925 (KPSCAKEVKS…THLPTFSQED (828 aa)) are Extracellular-facing. SMB domains are found at residues 104-144 (EVKS…IEPE) and 145-189 (HIWT…GEKS). Cystine bridges form between Cys108/Cys122, Cys112/Cys140, Cys120/Cys133, Cys126/Cys132, Cys149/Cys166, Cys154/Cys184, Cys164/Cys177, Cys170/Cys176, Cys195/Cys241, and Cys203/Cys415. Asn179 carries N-linked (GlcNAc...) asparagine glycosylation. Residues 191-591 (VEEPCESINE…APNNGTHGSL (401 aa)) are phosphodiesterase. The AMP site is built by Asp218, Thr256, and Asn277. Residues Asp218 and Thr256 each coordinate Zn(2+). Thr256 functions as the AMP-threonine intermediate in the catalytic mechanism. Residues Thr256 and Asn277 each coordinate CMP. Residues Thr256 and Asn277 each coordinate dTMP. GMP is bound by residues Thr256 and Asn277. At Thr256 the chain carries Phosphothreonine. An N-linked (GlcNAc...) asparagine glycan is attached at Asn285. Positions 290, 295, and 340 each coordinate GMP. The AMP site is built by Lys295 and Tyr340. CMP contacts are provided by Lys295 and Tyr340. Tyr340 contributes to the dTMP binding site. N-linked (GlcNAc...) asparagine glycosylation occurs at Asn341. An AMP-binding site is contributed by Asp376. Asp376, His380, Asp423, and His424 together coordinate Zn(2+). A CMP-binding site is contributed by Asp376. Asp376 provides a ligand contact to dTMP. Residue Asp376 participates in GMP binding. His380 contributes to the 2',3'-cGAMP binding site. His424 serves as a coordination point for AMP. His424 contacts CMP. Residue His424 participates in dTMP binding. Residue His424 participates in GMP binding. 6 cysteine pairs are disulfide-bonded: Cys431/Cys530, Cys480/Cys868, Cys614/Cys672, Cys626/Cys726, Cys628/Cys711, and Cys838/Cys848. An N-linked (GlcNAc...) asparagine glycan is attached at Asn477. 2',3'-cGAMP is bound at residue Ser532. His535 is a binding site for AMP. Zn(2+) is bound at residue His535. His535 is a CMP binding site. His535 contacts dTMP. His535 serves as a coordination point for GMP. N-linked (GlcNAc...) asparagine glycans are attached at residues Asn585, Asn643, Asn700, Asn731, and Asn748. The linker stretch occupies residues 597 to 647 (NPVYTPKHPKEVHPLVQCPFTRNPRDNLGCSCNPSILPIEDFQTQFNLTVA). A nuclease-like domain region spans residues 654–925 (HETLPYGRPR…THLPTFSQED (272 aa)). Ca(2+) is bound by residues Asp800, Asp802, Asp804, Arg806, and Asp808.

It belongs to the nucleotide pyrophosphatase/phosphodiesterase family. Homodimer. Interacts with INSR; leading to inhibit INSR autophosphorylation and subsequent activation of INSR kinase activity. As to quaternary structure, monomeric. It depends on Zn(2+) as a cofactor. Autophosphorylated as part of the catalytic cycle of phosphodiesterase/pyrophosphatase activity. Post-translationally, N-glycosylated. In terms of processing, the secreted form is produced through cleavage at Lys-103 by intracellular processing. In terms of tissue distribution, expressed in plasma cells and also in a number of non-lymphoid tissues, including the distal convoluted tubule of the kidney, chondrocytes and epididymis. Expressed in melanocytes but not in keratinocytes.

The protein resides in the cell membrane. It localises to the basolateral cell membrane. The protein localises to the secreted. It carries out the reaction Hydrolytically removes 5'-nucleotides successively from the 3'-hydroxy termini of 3'-hydroxy-terminated oligonucleotides.. The enzyme catalyses a ribonucleoside 5'-triphosphate + H2O = a ribonucleoside 5'-phosphate + diphosphate + H(+). It catalyses the reaction ATP + H2O = AMP + diphosphate + H(+). The catalysed reaction is UTP + H2O = UMP + diphosphate + H(+). It carries out the reaction GTP + H2O = GMP + diphosphate + H(+). The enzyme catalyses CTP + H2O = CMP + diphosphate + H(+). It catalyses the reaction 2',3'-cGAMP + 2 H2O = GMP + AMP + 2 H(+). The catalysed reaction is P(1),P(4)-bis(5'-adenosyl) tetraphosphate + H2O = AMP + ATP + 2 H(+). It carries out the reaction 3',5'-cyclic AMP + H2O = AMP + H(+). At low concentrations of ATP, a phosphorylated intermediate is formed which inhibits further hydrolysis. Nucleotide pyrophosphatase that generates diphosphate (PPi) and functions in bone mineralization and soft tissue calcification by regulating pyrophosphate levels. PPi inhibits bone mineralization and soft tissue calcification by binding to nascent hydroxyapatite crystals, thereby preventing further growth of these crystals. Preferentially hydrolyzes ATP, but can also hydrolyze other nucleoside 5' triphosphates such as GTP, CTP and UTP to their corresponding monophosphates with release of pyrophosphate, as well as diadenosine polyphosphates, and also 3',5'-cAMP to AMP. May also be involved in the regulation of the availability of nucleotide sugars in the endoplasmic reticulum and Golgi, and the regulation of purinergic signaling. Inhibits ectopic joint calcification and maintains articular chondrocytes by repressing hedgehog signaling; it is however unclear whether hedgehog inhibition is direct or indirect. Appears to modulate insulin sensitivity and function. Also involved in melanogenesis. Also able to hydrolyze 2',3'-cGAMP (cyclic GMP-AMP), a second messenger that activates TMEM173/STING and triggers type-I interferon production. 2',3'-cGAMP degradation takes place in the lumen or extracellular space, and not in the cytosol where it is produced; the role of 2',3'-cGAMP hydrolysis is therefore unclear. Not able to hydrolyze the 2',3'-cGAMP linkage isomer 3'-3'-cGAMP. This chain is Ectonucleotide pyrophosphatase/phosphodiesterase family member 1, found in Homo sapiens (Human).